A 158-amino-acid chain; its full sequence is GTP-dependent dephospho-CoA kinase (158 aa).

Residues aspartate 35, valine 36, aspartate 54, lysine 56, glutamate 109, and aspartate 132 each coordinate GTP.

It belongs to the GTP-dependent DPCK family.

The catalysed reaction is 3'-dephospho-CoA + GTP = GDP + CoA + H(+). Its pathway is cofactor biosynthesis; coenzyme A biosynthesis. Catalyzes the GTP-dependent phosphorylation of the 3'-hydroxyl group of dephosphocoenzyme A to form coenzyme A (CoA). The sequence is that of GTP-dependent dephospho-CoA kinase from Methanococcus maripaludis (strain C7 / ATCC BAA-1331).